The chain runs to 940 residues: UvrABC system protein A (940 aa).

31–38 contacts ATP; that stretch reads GLSGSGKS. Residues 252–279 form a C4-type zinc finger; sequence CPHCGYSMRELEPRLFSFNNPAGACPTC. ABC transporter domains follow at residues 309-586 and 606-936; these read WDQK…PNSL and KDAK…RFLK. 639–646 serves as a coordination point for ATP; that stretch reads GVSGSGKS. The C4-type zinc-finger motif lies at 739 to 765; that stretch reads CEACQGDGVIKVEMHFLPDVYVPCDVC.

Belongs to the ABC transporter superfamily. UvrA family. In terms of assembly, forms a heterotetramer with UvrB during the search for lesions.

It localises to the cytoplasm. The UvrABC repair system catalyzes the recognition and processing of DNA lesions. UvrA is an ATPase and a DNA-binding protein. A damage recognition complex composed of 2 UvrA and 2 UvrB subunits scans DNA for abnormalities. When the presence of a lesion has been verified by UvrB, the UvrA molecules dissociate. The chain is UvrABC system protein A from Vibrio cholerae serotype O1 (strain ATCC 39315 / El Tor Inaba N16961).